Consider the following 676-residue polypeptide: Hemin receptor (676 aa).

Residues 1–28 (MLRSTSDRFRWSSLSLAIACTLPLATQA) form the signal peptide. Positions 44 to 51 (DTMVVTAT) match the TonB box motif. Residues 56 to 167 (SSFEAPMMVT…LGGVIAYETV (112 aa)) enclose the TBDR plug domain. Positions 178-676 (NSGYRVYSSA…NVKFFVSYQW (499 aa)) constitute a TBDR beta-barrel domain. Residues 659–676 (QGIPQDGRNVKFFVSYQW) carry the TonB C-terminal box motif.

It belongs to the TonB-dependent receptor family.

The protein localises to the cell outer membrane. This protein is involved in the initial step of iron uptake by binding hemin, an iron chelatin siderophore that allows the bacteria to extract iron from the environment. In Yersinia pestis, this protein is Hemin receptor (hmuR).